Consider the following 535-residue polypeptide: Pyrichalasin C-18 hydroxylase (535 aa).

A helical transmembrane segment spans residues 42-62; it reads LPSGTLIVLAALSLALLVAVL. N-linked (GlcNAc...) asparagine glycosylation is found at N139 and N222. A heme-binding site is contributed by C479.

It belongs to the cytochrome P450 family. Requires heme as cofactor.

The protein resides in the membrane. Its pathway is mycotoxin biosynthesis. In terms of biological role, cytochrome P450 monooxygenase; part of the gene cluster that mediates the biosynthesis of the mycotoxin pyrichalasin H, a tyrosine-derived cytochalasan that inhibits the growth of rice seedlings, but also inhibits lymphocyte capping and actin polymerization and alters cell morphology. Pyrichalasin H is indicated as the responsible agent for the genus-specific pathogenicity of M.grisea toward crabgrass. The first step in the pathway is catalyzed by the O-methyltransferase pyiA which methylates free tyrosine to generate the precursor O-methyltyrosine. The hybrid PKS-NRPS pyiS, assisted by the enoyl reductase pyiC, are responsible for fusion of the O-methyltyrosine precursor and the polyketide backbone. The polyketide synthase module (PKS) of pyiS is responsible for the synthesis of the polyketide backbone and the downstream nonribosomal peptide synthetase (NRPS) amidates the carboxyl end of the polyketide with the O-methyltyrosine precursor. As the NRPS A-domain demonstrates substrate tolerance, pyiS can also use phenylalanine, tyrosine and even para-chlorophenylalanine as amino acid precursor, which leads to the production of novel cytochalasans, including halogenated cytochalasans. Because pyiS lacks a designated enoylreductase (ER) domain, the required activity is provided the enoyl reductase pyiC. Reduction by the hydrolyase pyiE leads to 1,5-dihydropyrrolone, which is substrate for dehydration and intra-molecular Diels-Alder cyclization by the Diels-Alderase pyiF to yield the required isoindolone-fused macrocycle. The tailoring cytochrome P450 monooxygenases piyD and piyG catalyze the hydroxylation at C-18 and C-7, respectivily, whereas the short-chain dehydrogenase/reductase pyiH reduces the carbonyl at C-21 in preparation for the transfer of an acetyl group by the acetyltransferase pyiB. These 3 reactions whose order is not clear yet, lead to the production of O-methylpyrichalasin J, a deacetylated pyrichalasin H. Finally, pyiB to converts O-methylpyrichalasin J into the final product pyrichalasin H via acetylation of C-21. This chain is Pyrichalasin C-18 hydroxylase, found in Pyricularia grisea (Crabgrass-specific blast fungus).